We begin with the raw amino-acid sequence, 2400 residues long: Retinitis pigmentosa 1-like 1 protein (2400 aa).

2 Doublecortin domains span residues Lys34–Arg118 and Arg152–Lys231. Disordered regions lie at residues Cys104–Arg152, Met230–Lys310, Gly444–Ala1064, Ala1188–Glu1251, Glu1275–Glu1501, and Arg1697–Phe2400. Positions Ser242–Gly251 are enriched in polar residues. Positions Arg277 to Pro287 are enriched in pro residues. The span at Gln450–Gly460 shows a compositional bias: polar residues. Composition is skewed to low complexity over residues Gly530–Glu543 and Asp573–Leu584. The segment covering Ala591–Ala601 has biased composition (polar residues). Low complexity-rich tracts occupy residues Ser625 to Gly637 and Ala645 to Pro654. The span at Pro661–Tyr670 shows a compositional bias: basic residues. 2 stretches are compositionally biased toward polar residues: residues Thr711–Val740 and Cys825–Gln835. Low complexity-rich tracts occupy residues Gln864–Thr880, Pro903–Gly921, and Ser941–Pro953. 2 stretches are compositionally biased toward polar residues: residues Leu1223 to Arg1238 and Ala1285 to Glu1299. One copy of the 1-1; approximate repeat lies at Leu1292–Lys1307. The interval Leu1292–Lys1342 is 3 X 16 AA approximate tandem repeats of T-E-E-G-L-Q-E-E-G-V-Q-L-E-E-T-K. The stretch at Thr1310 to Lys1326 is one 1-2; approximate repeat. A 1-3 repeat occupies Thr1327–Lys1342. Acidic residues predominate over residues Gly1346–Gly1363. Over residues Arg1434 to Glu1445 the composition is skewed to low complexity. Composition is skewed to polar residues over residues Thr1460–Gln1472 and Glu1489–Glu1501. The span at Ala1726–Gln1736 shows a compositional bias: gly residues. Basic and acidic residues-rich tracts occupy residues Leu1752 to Glu1762 and Ala1769 to Asn1778. A run of 3 repeats spans residues Glu1836–Val1851, Glu1852–Ala1867, and Glu1875–Val1890. Composition is skewed to acidic residues over residues Glu1836–Pro1909 and Glu1920–Gln1948. The segment at Glu1836–Glu2244 is 25 X 16 AA approximate tandem repeats of [ED]-[AT]-[PQ]-[ED]-[AVT]-E-[GKE]-[ED]-[AMT]-Q-[EPK]-[EAT]-[TSELP]-[EG]-[EGSQDI]-[AVIE]. One copy of the 2-4; approximate repeat lies at Glu1891–Ala1906. Residues Glu1907 to Ser1921 form a 2-5 repeat. Residues Glu1923–Ala1938 form a 2-6; approximate repeat. Positions Glu1934–Gln2017 form a coiled coil. The stretch at Glu1939–Thr1954 is one 2-7 repeat. Low complexity predominate over residues Glu1949–Ser1958. One copy of the 2-8; approximate repeat lies at Gln1955–Ala1970. 4 stretches are compositionally biased toward acidic residues: residues Glu1959 to Gly2022, Ala2048 to Glu2075, Glu2083 to Gly2108, and Glu2117 to Thr2245. The stretch at Gln1971–Val1984 is one 2-9; approximate repeat. 2 repeat units span residues Glu1985–Val2000 and Glu2001–Ala2016. One copy of the 2-12; approximate repeat lies at Gln2017–Gly2031. Residues Glu2033–Ala2048 form a 2-13d repeat. A coiled-coil region spans residues Gly2054–Glu2081. One copy of the 2-14 repeat lies at Glu2056 to Val2071. The stretch at Gln2072 to Val2085 is one 2-15; approximate repeat. 10 consecutive repeat copies span residues Asp2086–Val2101, Glu2102–Ile2116, Glu2117–Ile2132, Glu2133–Val2148, Glu2149–Ile2164, Glu2165–Val2180, Glu2181–Ile2196, Glu2197–Val2212, Glu2213–Val2228, and Glu2229–Glu2244. Positions Pro2292–Asn2308 are enriched in polar residues. A compositionally biased stretch (basic and acidic residues) spans Lys2312–Asp2327.

In terms of assembly, interacts with RP1; has a synergistic effect with RP1 in photoreceptor differentiation. In terms of tissue distribution, retinal-specific; expressed in photoreceptor.

The protein localises to the cytoplasm. The protein resides in the cytoskeleton. It localises to the cilium axoneme. Its subcellular location is the cell projection. It is found in the cilium. The protein localises to the photoreceptor outer segment. Its function is as follows. Required for the differentiation of photoreceptor cells. Plays a role in the organization of outer segment of rod and cone photoreceptors. The chain is Retinitis pigmentosa 1-like 1 protein (RP1L1) from Homo sapiens (Human).